A 207-amino-acid chain; its full sequence is Serotonin N-acetyltransferase (207 aa).

Residues 1–28 (MSMQSTHPPKPEAPRLPPGIPESPSCQR) are disordered. At T31 the chain carries Phosphothreonine; by PKA. The N-acetyltransferase domain maps to 35 to 202 (SEFRCLTPED…CSLRDHPFLR (168 aa)). L124 is a substrate binding site. Acetyl-CoA-binding positions include 124–126 (LAV) and 132–137 (QQGRGP). Substrate is bound at residue M159. 168–170 (YER) is an acetyl-CoA binding site. Phosphoserine is present on S205.

The protein belongs to the acetyltransferase family. AANAT subfamily. As to quaternary structure, monomer. Interacts with several 14-3-3 proteins, including YWHAB, YWHAE, YWHAG and YWHAZ, preferentially when phosphorylated at Thr-31. Phosphorylation on Ser-205 also allows binding to YWHAZ, but with lower affinity. The interaction with YWHAZ considerably increases affinity for arylalkylamines and acetyl-CoA and protects the enzyme from dephosphorylation and proteasomal degradation. It may also prevent thiol-dependent inactivation. CAMP-dependent phosphorylation on both N-terminal Thr-31 and C-terminal Ser-205 regulates AANAT activity by promoting interaction with 14-3-3 proteins.

Its subcellular location is the cytoplasm. It carries out the reaction a 2-arylethylamine + acetyl-CoA = an N-acetyl-2-arylethylamine + CoA + H(+). It functions in the pathway aromatic compound metabolism; melatonin biosynthesis; melatonin from serotonin: step 1/2. Controls the night/day rhythm of melatonin production in the pineal gland. Catalyzes the N-acetylation of serotonin into N-acetylserotonin, the penultimate step in the synthesis of melatonin. In Pan troglodytes (Chimpanzee), this protein is Serotonin N-acetyltransferase (AANAT).